A 589-amino-acid chain; its full sequence is Formate--tetrahydrofolate ligase (589 aa).

ATP is bound at residue Thr74–Ser81.

Belongs to the formate--tetrahydrofolate ligase family.

The catalysed reaction is (6S)-5,6,7,8-tetrahydrofolate + formate + ATP = (6R)-10-formyltetrahydrofolate + ADP + phosphate. Its pathway is one-carbon metabolism; tetrahydrofolate interconversion. This is Formate--tetrahydrofolate ligase from Thermodesulfovibrio yellowstonii (strain ATCC 51303 / DSM 11347 / YP87).